The chain runs to 493 residues: Probable cytochrome P450 508A2 (493 aa).

A helical transmembrane segment spans residues 1–21 (MIFGIIVYLFLIYILHNAYSK). C439 is a binding site for heme.

This sequence belongs to the cytochrome P450 family. The cofactor is heme.

Its subcellular location is the membrane. This Dictyostelium discoideum (Social amoeba) protein is Probable cytochrome P450 508A2 (cyp508A2-1).